The chain runs to 209 residues: ATP-dependent Clp protease proteolytic subunit (209 aa).

Ser-101 serves as the catalytic Nucleophile. His-126 is a catalytic residue.

This sequence belongs to the peptidase S14 family. As to quaternary structure, component of the chloroplastic Clp protease core complex.

It is found in the plastid. The protein localises to the chloroplast stroma. It catalyses the reaction Hydrolysis of proteins to small peptides in the presence of ATP and magnesium. alpha-casein is the usual test substrate. In the absence of ATP, only oligopeptides shorter than five residues are hydrolyzed (such as succinyl-Leu-Tyr-|-NHMec, and Leu-Tyr-Leu-|-Tyr-Trp, in which cleavage of the -Tyr-|-Leu- and -Tyr-|-Trp bonds also occurs).. Its function is as follows. Cleaves peptides in various proteins in a process that requires ATP hydrolysis. Has a chymotrypsin-like activity. Plays a major role in the degradation of misfolded proteins. This chain is ATP-dependent Clp protease proteolytic subunit, found in Huperzia lucidula (Shining clubmoss).